We begin with the raw amino-acid sequence, 344 residues long: Beta-1,4-galactosyltransferase 4 (344 aa).

At 1 to 12 (MGCNPPYHLSYR) the chain is on the cytoplasmic side. Residues 13–38 (LRLLLLFTLCLTVVGWATSNYFVGAI) traverse the membrane as a helical; Signal-anchor for type II membrane protein segment. Residues 39-344 (QVIPKAKDFM…NITVDFWTAA (306 aa)) lie on the Lumenal side of the membrane. Cysteines 77 and 118 form a disulfide. Residues 129–133 (PHRNR), 168–170 (FNR), and 195–196 (VD) contribute to the UDP-alpha-D-galactose site. A disulfide bridge connects residues C189 and C208. D196 provides a ligand contact to Mn(2+). An N-linked (GlcNAc...) asparagine glycan is attached at N220. Residues Y224 and W256 each coordinate UDP-alpha-D-galactose. Residue 258-261 (GEDD) coordinates N-acetyl-D-glucosamine. H289 contacts Mn(2+). 289–291 (HTR) serves as a coordination point for UDP-alpha-D-galactose. Residue R301 participates in N-acetyl-D-glucosamine binding. An N-linked (GlcNAc...) asparagine glycan is attached at N335.

It belongs to the glycosyltransferase 7 family. In terms of assembly, interacts with SLC35A2/UGT1. Mn(2+) is required as a cofactor.

The protein resides in the golgi apparatus membrane. The protein localises to the secreted. The enzyme catalyses N-acetyl-D-glucosamine + UDP-alpha-D-galactose = beta-D-galactosyl-(1-&gt;4)-N-acetyl-D-glucosamine + UDP + H(+). It carries out the reaction a beta-D-GlcNAc-(1-&gt;3)-beta-D-Gal-(1-&gt;4)-beta-D-Glc-(1&lt;-&gt;1)-Cer(d18:1(4E)) + UDP-alpha-D-galactose = a neolactoside nLc4Cer(d18:1(4E)) + UDP + H(+). It catalyses the reaction 3-O-{beta-D-galactosyl-(1-&gt;3)-[6-O-sulfo-N-acetyl-beta-D-glucosaminyl-(1-&gt;6)]-N-acetyl-alpha-D-galactosaminyl}-L-seryl-[protein] + UDP-alpha-D-galactose = 3-O-{beta-D-galactosyl-(1-&gt;3)-[beta-D-galactosyl-(1-&gt;4)-6-O-sulfo-N-acetyl-beta-D-glucosaminyl-(1-&gt;6)]-N-acetyl-alpha-D-galactosaminyl}-L-seryl-[protein] + UDP + H(+). The catalysed reaction is 3-O-{beta-D-galactosyl-(1-&gt;3)-[6-O-sulfo-N-acetyl-beta-D-glucosaminyl-(1-&gt;6)]-N-acetyl-alpha-D-galactosaminyl}-L-threonyl-[protein] + UDP-alpha-D-galactose = 3-O-{beta-D-galactosyl-(1-&gt;3)-[beta-D-galactosyl-(1-&gt;4)-6-O-sulfo-N-acetyl-beta-D-glucosaminyl-(1-&gt;6)]-N-acetyl-alpha-D-galactosaminyl}-L-threonyl-[protein] + UDP + H(+). It participates in protein modification; protein glycosylation. Its pathway is glycolipid biosynthesis. Galactose (Gal) transferase involved in the synthesis of terminal N-acetyllactosamine (LacNac) unit present on glycan chains of glycoproteins and glycosphingolipids. Catalyzes the transfer of Gal residue via a beta1-&gt;4 linkage from UDP-Gal to the non-reducing terminal N-acetyl glucosamine 6-O-sulfate (6-O-sulfoGlcNAc) in the linearly growing chain of both N- and O-linked keratan sulfate proteoglycans. Cooperates with B3GNT7 N-acetyl glucosamine transferase and CHST6 and CHST1 sulfotransferases to construct and elongate mono- and disulfated disaccharide units [-&gt;3Galbeta1-&gt;4(6-sulfoGlcNAcbeta)1-&gt;] and [-&gt;3(6-sulfoGalbeta)1-&gt;4(6-sulfoGlcNAcbeta)1-&gt;] within keratan sulfate polymer. Transfers Gal residue via a beta1-&gt;4 linkage to terminal 6-O-sulfoGlcNAc within the LacNac unit of core 2 O-glycans forming 6-sulfo-sialyl-Lewis X (sLex). May contribute to the generation of sLex epitope on mucin-type glycoproteins that serve as ligands for SELL/L-selectin, a major regulator of leukocyte migration. In the biosynthesis pathway of neolacto-series glycosphingolipids, transfers Gal residue via a beta1-&gt;4 linkage to terminal GlcNAc of a lactotriaosylceramide (Lc3Cer) acceptor to form a neolactotetraosylceramide. This is Beta-1,4-galactosyltransferase 4 from Mus musculus (Mouse).